A 354-amino-acid chain; its full sequence is Protein RecA (354 aa).

67 to 74 lines the ATP pocket; sequence GPESSGKT.

This sequence belongs to the RecA family.

The protein resides in the cytoplasm. Functionally, can catalyze the hydrolysis of ATP in the presence of single-stranded DNA, the ATP-dependent uptake of single-stranded DNA by duplex DNA, and the ATP-dependent hybridization of homologous single-stranded DNAs. It interacts with LexA causing its activation and leading to its autocatalytic cleavage. This Hamiltonella defensa subsp. Acyrthosiphon pisum (strain 5AT) protein is Protein RecA.